Here is a 106-residue protein sequence, read N- to C-terminus: U1-lycotoxin-Ls1b (106 aa).

The first 19 residues, 1–19 (MKVLVVVALLVTLISYSSS), serve as a signal peptide directing secretion. Residues 20 to 40 (EGIDDLEADELLSLMANEQTR) constitute a propeptide that is removed on maturation. 4 cysteine pairs are disulfide-bonded: Cys-43–Cys-58, Cys-50–Cys-67, Cys-57–Cys-85, and Cys-69–Cys-83.

It belongs to the neurotoxin 19 (CSTX) family. 04 (U1-Lctx) subfamily. As to expression, expressed by the venom gland.

It localises to the secreted. In Lycosa singoriensis (Wolf spider), this protein is U1-lycotoxin-Ls1b.